The chain runs to 471 residues: tRNA-2-methylthio-N(6)-dimethylallyladenosine synthase (471 aa).

The region spanning 33-151 (KKYMITTYGC…FPELLSRSME (119 aa)) is the MTTase N-terminal domain. Residues C42, C78, C112, C188, C192, and C195 each coordinate [4Fe-4S] cluster. Residues 174–404 (RKYDLKGFIN…LDKVNEISAE (231 aa)) form the Radical SAM core domain. The region spanning 407–470 (QSYLNKVVEV…TFSLNGEVIQ (64 aa)) is the TRAM domain.

Belongs to the methylthiotransferase family. MiaB subfamily. In terms of assembly, monomer. Requires [4Fe-4S] cluster as cofactor.

Its subcellular location is the cytoplasm. The enzyme catalyses N(6)-dimethylallyladenosine(37) in tRNA + (sulfur carrier)-SH + AH2 + 2 S-adenosyl-L-methionine = 2-methylsulfanyl-N(6)-dimethylallyladenosine(37) in tRNA + (sulfur carrier)-H + 5'-deoxyadenosine + L-methionine + A + S-adenosyl-L-homocysteine + 2 H(+). Its function is as follows. Catalyzes the methylthiolation of N6-(dimethylallyl)adenosine (i(6)A), leading to the formation of 2-methylthio-N6-(dimethylallyl)adenosine (ms(2)i(6)A) at position 37 in tRNAs that read codons beginning with uridine. In Alkaliphilus oremlandii (strain OhILAs) (Clostridium oremlandii (strain OhILAs)), this protein is tRNA-2-methylthio-N(6)-dimethylallyladenosine synthase.